The primary structure comprises 174 residues: Chromophore lyase CpcS/CpeS 1 (174 aa).

This sequence belongs to the CpcS/CpeS biliprotein lyase family.

Functionally, covalently attaches a chromophore to Cys residue(s) of phycobiliproteins. This chain is Chromophore lyase CpcS/CpeS 1, found in Trichodesmium erythraeum (strain IMS101).